The sequence spans 320 residues: Bifunctional phosphoglucose/phosphomannose isomerase (320 aa).

The SIS domain occupies 20-153 (IAKDLTPYKG…NLLGVDKDEL (134 aa)). Residues G37, S38, S80, S82, T85, and R132 each contribute to the D-fructose 6-phosphate site. Catalysis depends on E204, which acts as the Proton acceptor. H220 and K313 together coordinate D-fructose 6-phosphate. H220 (proton donor) is an active-site residue. K313 acts as the Proton acceptor in catalysis.

Belongs to the PGI/PMI family. As to quaternary structure, homodimer.

The enzyme catalyses alpha-D-glucose 6-phosphate = beta-D-fructose 6-phosphate. The catalysed reaction is D-mannose 6-phosphate = D-fructose 6-phosphate. Dual specificity isomerase that catalyzes the isomerization of both glucose-6-phosphate and mannose-6-phosphate to fructose-6-phosphate. This Aquifex aeolicus (strain VF5) protein is Bifunctional phosphoglucose/phosphomannose isomerase.